The chain runs to 229 residues: Urease accessory protein UreF (229 aa).

Belongs to the UreF family. As to quaternary structure, ureD, UreF and UreG form a complex that acts as a GTP-hydrolysis-dependent molecular chaperone, activating the urease apoprotein by helping to assemble the nickel containing metallocenter of UreC. The UreE protein probably delivers the nickel.

It is found in the cytoplasm. Functionally, required for maturation of urease via the functional incorporation of the urease nickel metallocenter. This is Urease accessory protein UreF from Trichormus variabilis (strain ATCC 29413 / PCC 7937) (Anabaena variabilis).